A 588-amino-acid polypeptide reads, in one-letter code: Transcriptional regulatory protein ASH1 (588 aa).

Ser-56 is modified (phosphoserine). Disordered stretches follow at residues 85-109 (SNTA…GNSP), 377-398 (SNNS…QASN), and 417-495 (SSVS…TRHT). Polar residues predominate over residues 99-109 (PISSLTPGNSP). The segment covering 383–392 (NVRKPSKNKI) has biased composition (basic residues). Low complexity predominate over residues 417-433 (SSVSASSSPSPSTPTKS). Ser-465 carries the post-translational modification Phosphoserine. Positions 470–493 (PRRSSNSSITKKGSRRSSGSSPTR) are enriched in low complexity. The segment at 499–526 (CVSCHSSDSPCWRPSWSPRKQDQLCNSC) adopts a GATA-type; atypical zinc-finger fold.

As to quaternary structure, component of the RPD3C(L) complex composed of at least ASH1, CTI6, DEP1, PHO23, RPD3, RXT2, RXT3, SAP30, SDS3, SIN3, UME1 and UME6.

The protein resides in the nucleus. Component of the RPD3C(L) histone deacetylase complex (HDAC). Responsible for the deacetylation of lysine residues on the N-terminal part of the core histones (H2A, H2B, H3 and H4). Histone deacetylation gives a tag for epigenetic repression and plays an important role in transcriptional regulation, cell cycle progression and developmental events. ASH1 is necessary to repress HO in daughter cells to block mating-type switching through its binding to HO promoter 5'-YTGAT-3' sites. Also involved in pseudohyphal growth. In Saccharomyces cerevisiae (strain ATCC 204508 / S288c) (Baker's yeast), this protein is Transcriptional regulatory protein ASH1 (ASH1).